Reading from the N-terminus, the 299-residue chain is Taste receptor type 2 member 1 (299 aa).

Residues 1 to 9 (MLESHLIIY) lie on the Extracellular side of the membrane. A helical transmembrane segment spans residues 10 to 30 (FLLAVIQFLLGIFTNGIIVVV). Over 31–55 (NGIDLIKHRKMAPLDLLLSCLAVSR) the chain is Cytoplasmic. The helical transmembrane segment at 56-76 (IFLQLFIFYVNVIVIFFIEFI) threads the bilayer. At 77 to 81 (MCSAN) the chain is on the extracellular side. Residues 82-102 (CAILLFINELELWLATWLGVF) form a helical membrane-spanning segment. Residues 103-124 (YCAKVASVRHPLFXWLKMRISK) are Cytoplasmic-facing. The chain crosses the membrane as a helical span at residues 125–145 (LVPWMILGSLLYVSMICVFHS). Residues 146–178 (KYAGFMVPYFLRNFFSQNTTIQKEDTLAIQIFS) lie on the Extracellular side of the membrane. An N-linked (GlcNAc...) asparagine glycan is attached at Asn163. Residues 179-199 (FVAEFSVPLLIFLVAVLLLIF) form a helical membrane-spanning segment. Residues 200-222 (SLGRHTRQMRNTVAGSRVPGRGA) are Cytoplasmic-facing. A helical membrane pass occupies residues 223-243 (PISALLSILSFLILYFSHCMI). The Extracellular segment spans residues 244–257 (KVFLSSLKFHIRRF). The chain crosses the membrane as a helical span at residues 258–278 (IFLFFILVIGIYPSGHSLILI). Residues 279–299 (LGNPKLKQNAKKFLLHSKCCQ) are Cytoplasmic-facing.

Belongs to the G-protein coupled receptor T2R family.

It is found in the membrane. Receptor that may play a role in the perception of bitterness and is gustducin-linked. May play a role in sensing the chemical composition of the gastrointestinal content. The activity of this receptor may stimulate alpha gustducin, mediate PLC-beta-2 activation and lead to the gating of TRPM5. The polypeptide is Taste receptor type 2 member 1 (TAS2R1) (Gorilla gorilla gorilla (Western lowland gorilla)).